Reading from the N-terminus, the 20-residue chain is Brevinin-1ITb (20 aa).

M8 is modified (methionine sulfoxide; partial). C14 and C20 form a disulfide bridge.

This sequence belongs to the frog skin active peptide (FSAP) family. Brevinin subfamily. Expressed by the skin glands.

It localises to the secreted. Antimicrobial peptide. The chain is Brevinin-1ITb from Rana italica (Italian stream frog).